A 250-amino-acid polypeptide reads, in one-letter code: DNA repair protein RecO (250 aa).

The protein belongs to the RecO family.

Its function is as follows. Involved in DNA repair and RecF pathway recombination. The protein is DNA repair protein RecO of Lactobacillus helveticus (strain DPC 4571).